The following is a 573-amino-acid chain: (R)-mandelonitrile lyase 3 (573 aa).

The signal sequence occupies residues 1 to 27; the sequence is MVKSTMSAVLLVLHIFVLHLQYSEVQS. The N-linked (GlcNAc...) asparagine glycan is linked to Asn-30. 63 to 64 is an FAD binding site; that stretch reads TA. N-linked (GlcNAc...) asparagine glycosylation occurs at Asn-75. FAD is bound by residues 82–83, Val-129, Thr-133, and 137–140; these read ER and NAGV. N-linked (GlcNAc...) asparagine glycosylation is found at Asn-145, Asn-150, Asn-162, and Asn-218. Val-244 is an FAD binding site. Residues Asn-252, Asn-267, and Asn-309 are each glycosylated (N-linked (GlcNAc...) asparagine). Position 356 (Cys-356) interacts with substrate. 4 N-linked (GlcNAc...) asparagine glycosylation sites follow: Asn-380, Asn-402, Asn-420, and Asn-467. A disulfide bridge links Cys-427 with Cys-478. Tyr-485 contacts substrate. FAD is bound by residues 486–487 and Gly-515; that span reads WH. The active-site Proton donor is the His-487. The active-site Proton acceptor is the His-525. 526 to 527 lines the FAD pocket; sequence PQ.

It belongs to the GMC oxidoreductase family. Monomer. FAD is required as a cofactor.

It localises to the vacuole. It is found in the aleurone grain. It carries out the reaction (R)-mandelonitrile = benzaldehyde + hydrogen cyanide. In terms of biological role, involved in cyanogenesis, the release of HCN from injured tissues. Catalyzes the stereospecific addition of HCN to a variety of aldehydes in vitro. It is a major seed constituent, and could have the additional role of a storage form for reduced nitrogen. In Prunus serotina (Black cherry), this protein is (R)-mandelonitrile lyase 3 (MDL3).